Here is a 403-residue protein sequence, read N- to C-terminus: cAMP-dependent protein kinase regulatory subunit (403 aa).

Residues 1 to 155 are dimerization and phosphorylation; it reads MADYTIPSEL…RIQASIGNNF (155 aa). The tract at residues 79–125 is disordered; the sequence is YAYSTDDGFGTEDDDDDDDDEDDEAAIPPPVVNRGRRTSVSAESMAP. Residues 87-103 show a composition bias toward acidic residues; sequence FGTEDDDDDDDDEDDEA. S117 carries the post-translational modification Phosphoserine. 3',5'-cyclic AMP contacts are provided by residues 156 to 278, E226, R235, 279 to 403, E349, and R358; these read LFRN…EEVP and LLSS…PGEH.

The protein belongs to the cAMP-dependent kinase regulatory chain family. Tetramer, composed of 2 regulatory (R) and 2 catalytic (C) subunits. In the presence of cAMP it dissociates into 2 active monomeric C subunits and an R dimer that binds four cAMP molecules.

This chain is cAMP-dependent protein kinase regulatory subunit (PKAR), found in Blastocladiella emersonii (Aquatic fungus).